Consider the following 469-residue polypeptide: Adenosylhomocysteinase (469 aa).

Substrate contacts are provided by threonine 63, aspartate 139, and glutamate 164. 165–167 (TTT) contacts NAD(+). Substrate contacts are provided by lysine 194 and aspartate 198. Residues asparagine 199, 228-233 (GYGDVG), glutamate 251, asparagine 300, 321-323 (IGH), and asparagine 375 each bind NAD(+).

Belongs to the adenosylhomocysteinase family. It depends on NAD(+) as a cofactor.

The protein localises to the cytoplasm. The enzyme catalyses S-adenosyl-L-homocysteine + H2O = L-homocysteine + adenosine. Its pathway is amino-acid biosynthesis; L-homocysteine biosynthesis; L-homocysteine from S-adenosyl-L-homocysteine: step 1/1. Functionally, may play a key role in the regulation of the intracellular concentration of adenosylhomocysteine. The sequence is that of Adenosylhomocysteinase from Pseudomonas aeruginosa (strain LESB58).